Reading from the N-terminus, the 213-residue chain is MTSLRYWDISPALDPSTPTWPGDTPFQQEWAARLDEQCPVNVGRITLSPHTGAHVDGPLHYRADGLPIGQVPLDIYMGPCRVIHCIGANPLVTPEHLAGQLDDLPSRVLLRTFERVPANWPEGFCAIAPATIECLAERGVRLVGIDTPSLDPQHSKTLDAHHAVGRHGMAILEGVVLDDVPAGDYELLALPLKFTHLDASPVRAVLRALPTAE.

A substrate-binding site is contributed by W20. Zn(2+)-binding residues include H50, H54, and D56. Residue H60 is the Proton donor/acceptor of the active site. Residues H161 and E173 each coordinate Zn(2+).

This sequence belongs to the Cyclase 1 superfamily. KynB family. In terms of assembly, homodimer. It depends on Zn(2+) as a cofactor.

It catalyses the reaction N-formyl-L-kynurenine + H2O = L-kynurenine + formate + H(+). The protein operates within amino-acid degradation; L-tryptophan degradation via kynurenine pathway; L-kynurenine from L-tryptophan: step 2/2. In terms of biological role, catalyzes the hydrolysis of N-formyl-L-kynurenine to L-kynurenine, the second step in the kynurenine pathway of tryptophan degradation. The sequence is that of Kynurenine formamidase from Pseudomonas aeruginosa (strain UCBPP-PA14).